The following is a 210-amino-acid chain: MADS-box protein AGL42 (210 aa).

Residues 1–61 (MVRGKIEMKK…GRLYEFSSSD (61 aa)) form the MADS-box domain. Residues 87 to 177 (LQQLKQEASH…HQKNVINPWR (91 aa)) form the K-box domain.

Expressed in quiescent center (QC) cells of root tips. Expressed at the base of the petiole of cotyledons and leaves, in flower buds, petals, sepals and abscission zone of flowers and siliques.

The protein resides in the nucleus. In terms of biological role, MADS-box transcription factor that acts with AGL71 and AGL72 in the control of flowering time. Promotes flowering at the shoot apical and axillary meristems. Seems to act through a gibberellin-dependent pathway. Interacts genetically with SOC1 and its expression is directly regulated by SOC1. Plays a role in controlling flower organ senescence and abscission by repressing ethylene responses and regulating the expression of BOP2 and IDA. The polypeptide is MADS-box protein AGL42 (AGL42) (Arabidopsis thaliana (Mouse-ear cress)).